A 418-amino-acid polypeptide reads, in one-letter code: Gamma-glutamyl phosphate reductase (418 aa).

The protein belongs to the gamma-glutamyl phosphate reductase family.

The protein resides in the cytoplasm. It catalyses the reaction L-glutamate 5-semialdehyde + phosphate + NADP(+) = L-glutamyl 5-phosphate + NADPH + H(+). It functions in the pathway amino-acid biosynthesis; L-proline biosynthesis; L-glutamate 5-semialdehyde from L-glutamate: step 2/2. Functionally, catalyzes the NADPH-dependent reduction of L-glutamate 5-phosphate into L-glutamate 5-semialdehyde and phosphate. The product spontaneously undergoes cyclization to form 1-pyrroline-5-carboxylate. The protein is Gamma-glutamyl phosphate reductase of Halothermothrix orenii (strain H 168 / OCM 544 / DSM 9562).